Here is a 304-residue protein sequence, read N- to C-terminus: UDP-3-O-acyl-N-acetylglucosamine deacetylase (304 aa).

Zn(2+)-binding residues include His79, His238, and Asp242. His265 acts as the Proton donor in catalysis.

It belongs to the LpxC family. Zn(2+) is required as a cofactor.

The enzyme catalyses a UDP-3-O-[(3R)-3-hydroxyacyl]-N-acetyl-alpha-D-glucosamine + H2O = a UDP-3-O-[(3R)-3-hydroxyacyl]-alpha-D-glucosamine + acetate. Its pathway is glycolipid biosynthesis; lipid IV(A) biosynthesis; lipid IV(A) from (3R)-3-hydroxytetradecanoyl-[acyl-carrier-protein] and UDP-N-acetyl-alpha-D-glucosamine: step 2/6. In terms of biological role, catalyzes the hydrolysis of UDP-3-O-myristoyl-N-acetylglucosamine to form UDP-3-O-myristoylglucosamine and acetate, the committed step in lipid A biosynthesis. The protein is UDP-3-O-acyl-N-acetylglucosamine deacetylase of Laribacter hongkongensis (strain HLHK9).